We begin with the raw amino-acid sequence, 695 residues long: D-(-)-3-hydroxybutyrate oligomer hydrolase (695 aa).

Positions 1-17 (MTTHGWGTRILLGAALA) are cleaved as a signal peptide. The Charge relay system role is filled by S308.

The protein belongs to the D-(-)-3-hydroxybutyrate oligomer hydrolase family.

It localises to the secreted. The enzyme catalyses (3R)-hydroxybutanoate dimer + H2O = 2 (R)-3-hydroxybutanoate + H(+). It functions in the pathway lipid metabolism; butanoate metabolism. Its function is as follows. Participates in the degradation of poly-3-hydroxybutyrate (PHB). It works downstream of poly(3-hydroxybutyrate) depolymerase, hydrolyzing D(-)-3-hydroxybutyrate oligomers of various length (3HB-oligomers) into 3HB-monomers. This Burkholderia ambifaria (strain ATCC BAA-244 / DSM 16087 / CCUG 44356 / LMG 19182 / AMMD) (Burkholderia cepacia (strain AMMD)) protein is D-(-)-3-hydroxybutyrate oligomer hydrolase.